Here is a 101-residue protein sequence, read N- to C-terminus: Putative membrane protein insertion efficiency factor (101 aa).

The protein belongs to the UPF0161 family.

The protein resides in the cell inner membrane. Its function is as follows. Could be involved in insertion of integral membrane proteins into the membrane. This Methylobacterium sp. (strain 4-46) protein is Putative membrane protein insertion efficiency factor.